A 154-amino-acid chain; its full sequence is 3-dehydroquinate dehydratase 2 (154 aa).

Residue Tyr23 is the Proton acceptor of the active site. 3 residues coordinate substrate: Asn79, His85, and Asp92. His105 acts as the Proton donor in catalysis. Substrate-binding positions include 106–107 (IS) and Arg116.

It belongs to the type-II 3-dehydroquinase family. Homododecamer.

It carries out the reaction 3-dehydroquinate = 3-dehydroshikimate + H2O. It participates in metabolic intermediate biosynthesis; chorismate biosynthesis; chorismate from D-erythrose 4-phosphate and phosphoenolpyruvate: step 3/7. Functionally, catalyzes a trans-dehydration via an enolate intermediate. The protein is 3-dehydroquinate dehydratase 2 (aroQ2) of Ralstonia nicotianae (strain ATCC BAA-1114 / GMI1000) (Ralstonia solanacearum).